Consider the following 808-residue polypeptide: Glutamate receptor 1.1 (808 aa).

The N-terminal stretch at 1 to 19 (MEILFSISILALLFSGVVA) is a signal peptide. The Extracellular portion of the chain corresponds to 20–541 (APSDDDVFEE…MWTFFDPFEK (522 aa)). Residues Asn288, Asn339, and Asn504 are each glycosylated (N-linked (GlcNAc...) asparagine). The chain crosses the membrane as a helical span at residues 542-562 (SLWLASGAFFVLTGIVVWLVE). The Cytoplasmic segment spans residues 563–570 (RSVNPEFQ). The helical transmembrane segment at 571 to 591 (GSWGQQLSMMLWFGFSTIVFA) threads the bilayer. Over 592–602 (HREKLQKMSSR) the chain is Cytoplasmic. Residues 603-623 (FLVIVWVFVVLILTSSYSANL) traverse the membrane as a helical segment. Residues 624–771 (TSTKTISRMQ…SKRFTFRELR (148 aa)) are Extracellular-facing. A helical membrane pass occupies residues 772–792 (GLFIIAGAAHVLVLALHLFHT). Residues 793 to 808 (RQEVSRLCTKLQSFYK) are Cytoplasmic-facing.

The protein belongs to the glutamate-gated ion channel (TC 1.A.10.1) family. In terms of assembly, may form heteromers. As to expression, expressed predominantly in roots. First detected in the root-shoot junction, and later in lateral roots and at the margin of matures leaves.

The protein localises to the membrane. In terms of biological role, glutamate-gated receptor that probably acts as a non-selective cation channel. Can transport sodium, potassium, and calcium ions. Functions as a carbon and nitrogen regulator and/or sensor that regulates carbon and nitrogen metabolism and distinct physiological process such as germination through the control of acid abscisic (ABA) biosynthesis. May be involved in light-signal transduction and calcium homeostasis via the regulation of calcium influx into cells. Seems required for the regulation of the abscisic acid (ABA) signaling pathway that modulates many aspects of plant physiology such as seed germination and response to drought (e.g. stomata opening). This chain is Glutamate receptor 1.1 (GLR1.1), found in Arabidopsis thaliana (Mouse-ear cress).